Reading from the N-terminus, the 202-residue chain is LexA repressor (202 aa).

The H-T-H motif DNA-binding region spans isoleucine 28–lysine 47. Residues serine 126 and lysine 163 each act as for autocatalytic cleavage activity in the active site.

This sequence belongs to the peptidase S24 family. In terms of assembly, homodimer.

The enzyme catalyses Hydrolysis of Ala-|-Gly bond in repressor LexA.. In terms of biological role, represses a number of genes involved in the response to DNA damage (SOS response), including recA and lexA. In the presence of single-stranded DNA, RecA interacts with LexA causing an autocatalytic cleavage which disrupts the DNA-binding part of LexA, leading to derepression of the SOS regulon and eventually DNA repair. This Leptospira biflexa serovar Patoc (strain Patoc 1 / Ames) protein is LexA repressor.